Consider the following 258-residue polypeptide: Trypsin eta (258 aa).

Residues 1–22 form the signal peptide; sequence MNKVILRILALLFLLGIGAVSA. Residues 23 to 27 constitute a propeptide, activation peptide; that stretch reads QPDGR. A Peptidase S1 domain is found at 28 to 258; it reads IVGGADTTNY…YFKDWIASRV (231 aa). Cys59 and Cys75 are joined by a disulfide. Active-site charge relay system residues include His74 and Asp120. 2 disulfides stabilise this stretch: Cys185–Cys200 and Cys211–Cys235. Residue Ser215 is the Charge relay system of the active site.

This sequence belongs to the peptidase S1 family.

The protein resides in the secreted. It is found in the extracellular space. The catalysed reaction is Preferential cleavage: Arg-|-Xaa, Lys-|-Xaa.. This is Trypsin eta (etaTry) from Drosophila erecta (Fruit fly).